The sequence spans 508 residues: Protection of telomeres protein tpz1 (508 aa).

Residues 2–223 (SNCLKHPWLE…ENTTHGIYLE (222 aa)) form a pot1-binding region. 3 disordered regions span residues 159–178 (QEAS…NSRD), 235–269 (VSET…PSLP), and 282–358 (PPPF…QSHR). Polar residues predominate over residues 327 to 347 (STEQLNSSLTIERSQSIQSTD). Over residues 348 to 358 (SKQRVETQSHR) the composition is skewed to basic and acidic residues. Residues 379 to 508 (TIDDSTGKLL…KKIEEFRNKS (130 aa)) are ccq1/poz1-binding.

In terms of assembly, interacts with ccq1, pot1 and poz1.

Its subcellular location is the chromosome. It localises to the telomere. The protein localises to the nucleus. Functionally, telomeric DNA-binding protein that is required to protect the 3'-end telomeric overhang and involved in telomere length regulation. recruits poz1 and ccq1 to telomeres, regulating telomere length negatively and positively respectively. This chain is Protection of telomeres protein tpz1 (tpz1), found in Schizosaccharomyces pombe (strain 972 / ATCC 24843) (Fission yeast).